The following is a 217-amino-acid chain: Meiotically up-regulated gene 37 protein (217 aa).

Functionally, has a role in meiosis. The sequence is that of Meiotically up-regulated gene 37 protein (mug37) from Schizosaccharomyces pombe (strain 972 / ATCC 24843) (Fission yeast).